A 343-amino-acid chain; its full sequence is UDP-N-acetylglucosamine--N-acetylmuramyl-(pentapeptide) pyrophosphoryl-undecaprenol N-acetylglucosamine transferase (343 aa).

UDP-N-acetyl-alpha-D-glucosamine is bound by residues 10–12 (TGG), Asn113, Ser174, and Gln275.

This sequence belongs to the glycosyltransferase 28 family. MurG subfamily.

The protein localises to the cell membrane. The catalysed reaction is di-trans,octa-cis-undecaprenyl diphospho-N-acetyl-alpha-D-muramoyl-L-alanyl-D-glutamyl-meso-2,6-diaminopimeloyl-D-alanyl-D-alanine + UDP-N-acetyl-alpha-D-glucosamine = di-trans,octa-cis-undecaprenyl diphospho-[N-acetyl-alpha-D-glucosaminyl-(1-&gt;4)]-N-acetyl-alpha-D-muramoyl-L-alanyl-D-glutamyl-meso-2,6-diaminopimeloyl-D-alanyl-D-alanine + UDP + H(+). The protein operates within cell wall biogenesis; peptidoglycan biosynthesis. Functionally, cell wall formation. Catalyzes the transfer of a GlcNAc subunit on undecaprenyl-pyrophosphoryl-MurNAc-pentapeptide (lipid intermediate I) to form undecaprenyl-pyrophosphoryl-MurNAc-(pentapeptide)GlcNAc (lipid intermediate II). The polypeptide is UDP-N-acetylglucosamine--N-acetylmuramyl-(pentapeptide) pyrophosphoryl-undecaprenol N-acetylglucosamine transferase (Wolbachia sp. subsp. Drosophila simulans (strain wRi)).